The sequence spans 353 residues: Nicotinate-nucleotide--dimethylbenzimidazole phosphoribosyltransferase (353 aa).

The Proton acceptor role is filled by glutamate 318.

It belongs to the CobT family.

It carries out the reaction 5,6-dimethylbenzimidazole + nicotinate beta-D-ribonucleotide = alpha-ribazole 5'-phosphate + nicotinate + H(+). It functions in the pathway nucleoside biosynthesis; alpha-ribazole biosynthesis; alpha-ribazole from 5,6-dimethylbenzimidazole: step 1/2. Functionally, catalyzes the synthesis of alpha-ribazole-5'-phosphate from nicotinate mononucleotide (NAMN) and 5,6-dimethylbenzimidazole (DMB). The sequence is that of Nicotinate-nucleotide--dimethylbenzimidazole phosphoribosyltransferase from Roseiflexus castenholzii (strain DSM 13941 / HLO8).